A 524-amino-acid polypeptide reads, in one-letter code: Na(+)/H(+) antiporter NhaB (524 aa).

9 helical membrane passes run 13 to 33 (FLGNSPDWYKLAIMGFLIINP), 98 to 118 (LLLVFMVAGIYFMKQLLLFVF), 140 to 160 (AFLSAFLDALTVIAVVISVSV), 239 to 259 (FFIRMLPVTLPVFIFGLLVCL), 304 to 324 (AIIGVWLVLALALHLAEVGLV), 325 to 345 (GLSVIILATSFCGITNEHSLG), 358 to 378 (LTVFFAVVAVIIEQSLFTPII), 448 to 468 (ATPNGQAAFLFLLTSALAPLI), and 479 to 499 (ALPYTLVMTIVGLLGVEFLLV).

Belongs to the NhaB Na(+)/H(+) (TC 2.A.34) antiporter family.

It is found in the cell inner membrane. The catalysed reaction is 2 Na(+)(in) + 3 H(+)(out) = 2 Na(+)(out) + 3 H(+)(in). Na(+)/H(+) antiporter that extrudes sodium in exchange for external protons. This chain is Na(+)/H(+) antiporter NhaB, found in Yersinia pestis (strain Pestoides F).